We begin with the raw amino-acid sequence, 255 residues long: Reticulon-like protein B3 (255 aa).

The span at 1–25 shows a compositional bias: basic and acidic residues; sequence MAEEHKHEESIMEKISEKIHGHDDS. Residues 1-38 are disordered; the sequence is MAEEHKHEESIMEKISEKIHGHDDSSSSSSDSDDDKNS. Ala2 bears the N-acetylalanine mark. In terms of domain architecture, Reticulon spans 64–255; sequence PADIFLWRNK…GAFAFIKKKD (192 aa). The next 3 membrane-spanning stretches (helical) occupy residues 75-95, 97-117, and 186-206; these read VSGG…LLEY, LLTL…LWSS, and CNFL…PVLY.

The protein localises to the endoplasmic reticulum membrane. It is found in the vacuole membrane. This Arabidopsis thaliana (Mouse-ear cress) protein is Reticulon-like protein B3 (RTNLB3).